The chain runs to 447 residues: Cysteine--tRNA ligase (447 aa).

Cys28 lines the Zn(2+) pocket. The short motif at 30–40 is the 'HIGH' region element; sequence PTVYNYIHIGN. Zn(2+) contacts are provided by Cys211, His236, and Glu240. Residues 268 to 272 carry the 'KMSKS' region motif; the sequence is KMSKS. Lys271 is an ATP binding site.

Belongs to the class-I aminoacyl-tRNA synthetase family. In terms of assembly, monomer. Requires Zn(2+) as cofactor.

The protein resides in the cytoplasm. It catalyses the reaction tRNA(Cys) + L-cysteine + ATP = L-cysteinyl-tRNA(Cys) + AMP + diphosphate. The chain is Cysteine--tRNA ligase from Streptococcus pyogenes serotype M18 (strain MGAS8232).